The chain runs to 346 residues: Uroporphyrinogen decarboxylase (346 aa).

Substrate contacts are provided by residues 23-27 (RQAGR), Asp72, Tyr155, Ser209, and His322.

Belongs to the uroporphyrinogen decarboxylase family. In terms of assembly, homodimer.

The protein resides in the cytoplasm. It catalyses the reaction uroporphyrinogen III + 4 H(+) = coproporphyrinogen III + 4 CO2. Its pathway is porphyrin-containing compound metabolism; protoporphyrin-IX biosynthesis; coproporphyrinogen-III from 5-aminolevulinate: step 4/4. Its function is as follows. Catalyzes the decarboxylation of four acetate groups of uroporphyrinogen-III to yield coproporphyrinogen-III. In Anaeromyxobacter sp. (strain Fw109-5), this protein is Uroporphyrinogen decarboxylase.